The chain runs to 100 residues: Small ribosomal subunit protein uS14 (100 aa).

It belongs to the universal ribosomal protein uS14 family. As to quaternary structure, part of the 30S ribosomal subunit. Contacts proteins S3 and S10.

Its function is as follows. Binds 16S rRNA, required for the assembly of 30S particles and may also be responsible for determining the conformation of the 16S rRNA at the A site. The polypeptide is Small ribosomal subunit protein uS14 (Prochlorococcus marinus (strain NATL2A)).